Consider the following 200-residue polypeptide: Guanylyl cyclase-activating protein 2 (200 aa).

A lipid anchor (N-myristoyl glycine) is attached at Gly-2. EF-hand domains follow at residues 14-31 (GEID…FVME), 53-88 (EASQ…VLRG), 89-124 (TLEH…IYQL), and 141-176 (TPEE…DKWV). Residues Asp-66, Asn-68, Asp-70, Thr-72, Glu-77, Asp-102, Asp-104, Asn-106, Cys-108, Glu-113, Asp-154, Asn-156, Asp-158, Gln-160, and Glu-165 each contribute to the Ca(2+) site.

In terms of processing, the N-terminus is blocked. As to expression, in the retina, it is expressed in cone and rod photoreceptor cells.

It is found in the cell membrane. The protein resides in the photoreceptor inner segment. Its subcellular location is the cell projection. The protein localises to the cilium. It localises to the photoreceptor outer segment. Functionally, stimulates two retinal guanylyl cyclases (GCs) GUCY2D and GUCY2F when free calcium ions concentration is low, and inhibits GUCY2D and GUCY2F when free calcium ions concentration is elevated. This Ca(2+)-sensitive regulation of GCs is a key event in recovery of the dark state of rod photoreceptors following light exposure. May be involved in cone photoreceptor response and recovery of response in bright light. The chain is Guanylyl cyclase-activating protein 2 (GUCA1B) from Homo sapiens (Human).